The chain runs to 71 residues: Brevinin-1CG4 (71 aa).

The first 22 residues, 1 to 22 (MFTLKKSLLLLFFLGTINLSLC), serve as a signal peptide directing secretion. Residues 23 to 45 (EQERNADEEERRDDSDKRDVEVE) constitute a propeptide, removed in mature form. Cys65 and Cys71 form a disulfide bridge.

This sequence belongs to the frog skin active peptide (FSAP) family. Brevinin subfamily. As to expression, expressed by the skin glands.

The protein resides in the secreted. Antimicrobial peptide active against a variety of Gram-positive and some Gram-negative bacterial strains. Has antifungal activity against C.albicans ATCC 10231 and a slime mold isolate. Has hemolytic activity against human erythrocytes. The sequence is that of Brevinin-1CG4 from Amolops chunganensis (Chungan torrent frog).